The sequence spans 94 residues: Neutrophil defensin 1 (94 aa).

The signal sequence occupies residues 1–19; sequence MRTLAILAAILLVALQAQA. A propeptide spanning residues 20–64 is cleaved from the precursor; it reads EPLQARADEVAAAPEQIPADNPEVVVSLAWDESLAPKHPGSRKNV. 3 disulfide bridges follow: C66-C94, C68-C83, and C73-C93. ADP-ribosylarginine; by ART1 is present on R78. Y85 is modified (phosphotyrosine). R88 is modified (ADP-ribosylarginine; by ART1).

Belongs to the alpha-defensin family. Tetramer. Dimer. Interacts with RETN. ADP-ribosylation drastically reduces cytotoxic and antibacterial activities, and enhances IL8 production.

Its subcellular location is the secreted. Effector molecule of the innate immune system that acts via antibiotic-like properties against a broad array of infectious agents including bacteria, fungi, and viruses or by promoting the activation and maturation of some APCs. Interacts with the essential precursor of cell wall synthesis lipid II to inhibit bacterial cell wall synthesis. Inhibits adenovirus infection via inhibition of viral disassembly at the vertex region, thereby restricting the release of internal capsid protein pVI, which is required for endosomal membrane penetration during cell entry. In addition, interaction with adenovirus capsid leads to the redirection of viral particles to TLR4 thereby promoting a NLRP3-mediated inflammasome response and interleukin 1-beta (IL-1beta) release. Induces the production of proinflammatory cytokines including type I interferon (IFN) in plasmacytoid dendritic cells (pDCs) by triggering the degradation of NFKBIA and nuclear translocation of IRF1, both of which are required for activation of pDCs. In Pan troglodytes (Chimpanzee), this protein is Neutrophil defensin 1 (DEFA1).